The sequence spans 291 residues: ATP synthase gamma chain (291 aa).

Belongs to the ATPase gamma chain family. As to quaternary structure, F-type ATPases have 2 components, CF(1) - the catalytic core - and CF(0) - the membrane proton channel. CF(1) has five subunits: alpha(3), beta(3), gamma(1), delta(1), epsilon(1). CF(0) has three main subunits: a, b and c.

The protein resides in the cell inner membrane. Functionally, produces ATP from ADP in the presence of a proton gradient across the membrane. The gamma chain is believed to be important in regulating ATPase activity and the flow of protons through the CF(0) complex. This is ATP synthase gamma chain from Aquifex aeolicus (strain VF5).